The chain runs to 252 residues: Chitooligosaccharide deacetylase (252 aa).

Positions 61 and 125 each coordinate Mg(2+).

Belongs to the YdjC deacetylase family. ChbG subfamily. Homodimer. The cofactor is Mg(2+).

It is found in the cytoplasm. The enzyme catalyses N,N'-diacetylchitobiose + H2O = N-acetyl-beta-D-glucosaminyl-(1-&gt;4)-D-glucosamine + acetate. It carries out the reaction diacetylchitobiose-6'-phosphate + H2O = N'-monoacetylchitobiose-6'-phosphate + acetate. It functions in the pathway glycan degradation; chitin degradation. Functionally, involved in the degradation of chitin. ChbG is essential for growth on the acetylated chitooligosaccharides chitobiose and chitotriose but is dispensable for growth on cellobiose and chitosan dimer, the deacetylated form of chitobiose. Deacetylation of chitobiose-6-P and chitotriose-6-P is necessary for both the activation of the chb promoter by the regulatory protein ChbR and the hydrolysis of phosphorylated beta-glucosides by the phospho-beta-glucosidase ChbF. Catalyzes the removal of only one acetyl group from chitobiose-6-P to yield monoacetylchitobiose-6-P, the inducer of ChbR and the substrate of ChbF. The chain is Chitooligosaccharide deacetylase from Salmonella paratyphi A (strain ATCC 9150 / SARB42).